The sequence spans 953 residues: UvrABC system protein A (953 aa).

An ATP-binding site is contributed by 33-40 (GLSGSGKS). 2 consecutive ABC transporter domains span residues 320–599 (WGST…EESI) and 619–949 (GHDN…RYLK). 652 to 659 (GVSGSGKS) is an ATP binding site. The C4-type zinc finger occupies 752–778 (CEACQGDGLIKIEMHFLPDVYVKCDIC).

Belongs to the ABC transporter superfamily. UvrA family. As to quaternary structure, forms a heterotetramer with UvrB during the search for lesions.

It is found in the cytoplasm. Functionally, the UvrABC repair system catalyzes the recognition and processing of DNA lesions. UvrA is an ATPase and a DNA-binding protein. A damage recognition complex composed of 2 UvrA and 2 UvrB subunits scans DNA for abnormalities. When the presence of a lesion has been verified by UvrB, the UvrA molecules dissociate. The protein is UvrABC system protein A of Rickettsia bellii (strain RML369-C).